A 458-amino-acid chain; its full sequence is MIATKGRNVVVVGTQWGDEGKGKLVDWLTESAQGVVRFQGGHNAGHTLVIHGVKTALHLVPSGIMRPGVKCYIGNGVVLSAAKLFEEIEALEKAGVELRSRLRISEACPLILPFHAALDVAREAAREQGGQAKIGTTGRGIGPAYEDKIARRALRVQDLKFPERFARKLHELLDLHNHVLTTYLGSVAFDFGPTLAPYMADGKVLFQPVFDEAMRHAQLLKPMMADVSRELNEAHLKGANLLFEGAQGTLLDVDHGTYPYVTSSNCVAGNAAAGSGVGPGMLHYVLGITKAYCTRVGGGPFPTELAWEVEGTPGYHMSTVGAEKGVTTGRSRRCGWFDAALLKRSAQVNGLTGLCITKLDVLDGLKELKLCTGYQLDGELTDILPMGADDIERCTPVYETISGWSDSTVGVTQFDKLPTNARLYLQRIEQITGVPIHMVSTGPDRAQTILMRHPYLAD.

GTP-binding positions include 17–23 and 45–47; these read GDEGKGK and GHT. The active-site Proton acceptor is the D18. 2 residues coordinate Mg(2+): D18 and G45. IMP contacts are provided by residues 18 to 21, 43 to 46, T137, R151, Q247, T262, and R330; these read DEGK and NAGH. The Proton donor role is filled by H46. 326–332 lines the substrate pocket; the sequence is VTTGRSR. GTP contacts are provided by residues R332, 358–360, and 440–442; these read KLD and STG.

This sequence belongs to the adenylosuccinate synthetase family. Homodimer. Requires Mg(2+) as cofactor.

Its subcellular location is the cytoplasm. The enzyme catalyses IMP + L-aspartate + GTP = N(6)-(1,2-dicarboxyethyl)-AMP + GDP + phosphate + 2 H(+). It participates in purine metabolism; AMP biosynthesis via de novo pathway; AMP from IMP: step 1/2. In terms of biological role, plays an important role in the de novo pathway of purine nucleotide biosynthesis. Catalyzes the first committed step in the biosynthesis of AMP from IMP. The sequence is that of Adenylosuccinate synthetase from Albidiferax ferrireducens (strain ATCC BAA-621 / DSM 15236 / T118) (Rhodoferax ferrireducens).